Consider the following 291-residue polypeptide: Transcription factor bHLH53 (291 aa).

The bHLH domain occupies 163 to 212 (PTLSSQSIAARGRRRRIAEKTHELGKLIPGGNKLNTAEMFQAAAKYVKFL).

In terms of assembly, homodimer. In terms of tissue distribution, expressed constitutively in roots, leaves, stems, and flowers.

Its subcellular location is the nucleus. The polypeptide is Transcription factor bHLH53 (BHLH53) (Arabidopsis thaliana (Mouse-ear cress)).